The sequence spans 88 residues: Large ribosomal subunit protein bL31B (88 aa).

Belongs to the bacterial ribosomal protein bL31 family. Type B subfamily. As to quaternary structure, part of the 50S ribosomal subunit.

The sequence is that of Large ribosomal subunit protein bL31B from Corynebacterium efficiens (strain DSM 44549 / YS-314 / AJ 12310 / JCM 11189 / NBRC 100395).